Consider the following 299-residue polypeptide: Protease HtpX homolog (299 aa).

2 helical membrane-spanning segments follow: residues 14-34 (WLLL…VGYL) and 39-59 (GFGG…TMIF). Residue H143 coordinates Zn(2+). Residue E144 is part of the active site. H147 serves as a coordination point for Zn(2+). 2 helical membrane-spanning segments follow: residues 153–173 (IRIS…AVMA) and 198–218 (IILL…ATLV). E227 provides a ligand contact to Zn(2+).

It belongs to the peptidase M48B family. Zn(2+) is required as a cofactor.

Its subcellular location is the cell membrane. In Streptococcus thermophilus (strain CNRZ 1066), this protein is Protease HtpX homolog.